The following is a 236-amino-acid chain: MGVEGCTKCIKYLLFVFNFVFWLAGGVILGVALWLRHDPQTTSLLYLELGNKPAPNTFYVGIYILIAVGAVMMFVGFLGCYGAIQESQCLLGTFFTCLVILFACEVAAGIWGFVNKDQIAKDVKQFYDQALQQAVMDDDANNAKAVVKTFHETLNCCGSNALTTLTTTILRNSLCPSGGNILTPLLQQDCHQKIDELFSGKLYLIGIAAIVVAVIMIFEMILSMVLCCGIRNSSVY.

Topologically, residues 1–12 (MGVEGCTKCIKY) are cytoplasmic. The chain crosses the membrane as a helical span at residues 13 to 33 (LLFVFNFVFWLAGGVILGVAL). The Extracellular segment spans residues 34–63 (WLRHDPQTTSLLYLELGNKPAPNTFYVGIY). A helical transmembrane segment spans residues 64-84 (ILIAVGAVMMFVGFLGCYGAI). The Cytoplasmic portion of the chain corresponds to 85-89 (QESQC). A helical membrane pass occupies residues 90 to 112 (LLGTFFTCLVILFACEVAAGIWG). Residues 113-201 (FVNKDQIAKD…QKIDELFSGK (89 aa)) lie on the Extracellular side of the membrane. 2 disulfides stabilise this stretch: Cys156-Cys190 and Cys157-Cys175. The chain crosses the membrane as a helical span at residues 202–224 (LYLIGIAAIVVAVIMIFEMILSM). Glu219 contributes to the cholesterol binding site. Residues 225 to 236 (VLCCGIRNSSVY) lie on the Cytoplasmic side of the membrane.

It belongs to the tetraspanin (TM4SF) family. In terms of assembly, homodimer. Part of a complex composed of CD19, CR2/CD21, CD81 and IFITM1/CD225 in the membrane of mature B cells. Interacts (via the second extracellular domain) with CD19; this interaction is initiated early during biosynthesis in the ER and enables trafficking of only properly folded CD19. Part of a complex that includes MHC class II/HLA-DR molecules and IFITM1. Interacts with IFITM1. Interacts with IFITM2 and IFITM3. Part of integrin-tetraspanin complex composed of CD9, CD81, beta-1 and beta-2 integrins in the membrane of monocyte/macrophages. Interacts (via the second extracellular domain) with integrin ITGAV:ITGB3. Interacts with CD247/CD3 zeta, ICAM1 and CD9 at the immune synapse on T cell membrane. Part of a GPCR-tetraspanin complex consisting at least of ADGRG1, CD81, possibly CD9, and GNA11 in which CD81 enhances the association of ADGRG1 with GNA11. Part of a complex composed of CD9, CD81, PTGFRN and IGSF8. Interacts directly with IGSF8. Interacts with CD53 and SCIMP. Interacts with SAMHD1 (via its C-terminus). Interacts with glypican GPC3 and with the transcriptional repressor HHEX; binding to GPC3 decreases the availability of free CD81 for binding to HHEX, resulting in nuclear translocation of HHEX and transcriptional repression. Interacts with CLDN1. Interacts with CLDN6 and CLDN9. Not glycosylated. Post-translationally, likely constitutively palmitoylated at low levels. Protein palmitoylation is up-regulated upon coligation of BCR and CD9-C2R-CD81 complexes in lipid rafts. In terms of tissue distribution, expressed in oocytes (at protein level). Highly expressed in granulosa cells. Expressed in skeletal muscle mainly in endothelial cells of endomysial capillaries, in satellite cells and myoblasts (at protein level). Expressed in hepatocytes (at protein level).

The protein resides in the cell membrane. Its subcellular location is the basolateral cell membrane. Its function is as follows. Structural component of specialized membrane microdomains known as tetraspanin-enriched microdomains (TERMs), which act as platforms for receptor clustering and signaling. Essential for trafficking and compartmentalization of CD19 receptor on the cell surface of activated B cells. Upon initial encounter with a microbial pathogen, enables the assembly of CD19-CR2 and B cell receptor complexes at signaling TERMs, lowering the threshold dose of antigen required to trigger B cell clonal expansion and humoral immune response. In T cells, associates with CD4 or CD8 coreceptors and defines the maturation state of antigen-induced synapses with B cells. Facilitates localization of CD3 in these immune synapses, required for costimulation and sustained activation of T cells, preferentially triggering T helper type 2 immune response. Can act both as positive and negative regulator of homotypic or heterotypic cell-cell fusion processes. In myoblasts, associates with another tetraspanin CD9 in complex with PTGFRN and inhibits myotube fusion during muscle regeneration. In macrophages, associates with CD9 and beta-1 and beta-2 integrins, and prevents macrophage fusion into multinucleated giant cells specialized in ingesting complement-opsonized large particles. Also prevents the fusion between mononuclear cell progenitors into osteoclasts in charge of bone resorption. Positively regulates sperm-egg fusion and may be involved in the acrosome reaction. Regulates protein trafficking in intracellular compartments. In T cells, associates with dNTPase SAMHD1 and defines its subcellular location, enabling its degradation by the proteasome and thereby controlling intracellular dNTP levels. Also regulates integrin-dependent migration of macrophages, particularly relevant for inflammatory response in the lung. (Microbial infection) Specifically required for Plasmodium yoelii infectivity of hepatocytes, controlling sporozoite entry in hepatocytes via the parasitophorous vacuole and subsequent parasite differentiation to exoerythrocytic forms. The polypeptide is CD81 antigen (Mus musculus (Mouse)).